The chain runs to 85 residues: XSSLPAASVSLPADSEGGEEEDLQCVCLKTTSGIHPRHISSLEVIGAGLHCPSPQLIATLKTGRKICLDQQNPLYKKIIKRLLKN.

2 cysteine pairs are disulfide-bonded: Cys-25–Cys-51 and Cys-27–Cys-67. Position 41 is a phosphoserine (Ser-41). 76-82 (KKIIKRL) is a heparin binding site.

The protein belongs to the intercrine alpha (chemokine CxC) family. Homotetramer. Interacts with TNFAIP6 (via Link domain). Interacts with CCR1. Interacts with CXCR3. Interacts with THBD; this interaction enhances generation of activated protein C.

The protein resides in the secreted. Its function is as follows. Chemokine released during platelet aggregation that plays a role in different biological processes including hematopoiesis, cell proliferation, differentiation, and activation. Acts via different functional receptors including CCR1, CXCR3A or CXCR3B. Upon interaction with CXCR3A receptor, induces activated T-lymphocytes migration mediated via downstream Ras/extracellular signal-regulated kinase (ERK) signaling. Neutralizes the anticoagulant effect of heparin by binding more strongly to heparin than to the chondroitin-4-sulfate chains of the carrier molecule. Plays a role in the inhibition of hematopoiesis and in the maintenance of hematopoietic stem cell (HSC) quiescence. Chemotactic for neutrophils and monocytes via CCR1. Inhibits endothelial cell proliferation. In cooperation with toll-like receptor 8/TLR8, induces chromatin remodeling and activates inflammatory gene expression via the TBK1-IRF5 axis. In addition, induces myofibroblast differentiation and collagen synthesis in different precursor cells, including endothelial cells, by stimulating endothelial-to-mesenchymal transition. Interacts with thrombomodulin/THBD to enhance the activation of protein C and thus potentiates its anticoagulant activity. This is Platelet factor 4 (PF4) from Ovis aries (Sheep).